Reading from the N-terminus, the 416-residue chain is Adenylosuccinate synthetase (416 aa).

GTP is bound by residues 13-19 (GDEGKGK) and 41-43 (GHT). Asp-14 serves as the catalytic Proton acceptor. Residues Asp-14 and Gly-41 each contribute to the Mg(2+) site. Residues 14-17 (DEGK), 39-42 (NAGH), Thr-126, Arg-140, Gln-220, Thr-235, and Arg-299 each bind IMP. His-42 (proton donor) is an active-site residue. 295–301 (TTTGRKR) serves as a coordination point for substrate. Residues Arg-301, 327–329 (KLD), and 405–407 (STS) each bind GTP.

This sequence belongs to the adenylosuccinate synthetase family. Homodimer. Requires Mg(2+) as cofactor.

Its subcellular location is the cytoplasm. It catalyses the reaction IMP + L-aspartate + GTP = N(6)-(1,2-dicarboxyethyl)-AMP + GDP + phosphate + 2 H(+). It functions in the pathway purine metabolism; AMP biosynthesis via de novo pathway; AMP from IMP: step 1/2. Its function is as follows. Plays an important role in the de novo pathway of purine nucleotide biosynthesis. Catalyzes the first committed step in the biosynthesis of AMP from IMP. In Campylobacter hominis (strain ATCC BAA-381 / DSM 21671 / CCUG 45161 / LMG 19568 / NCTC 13146 / CH001A), this protein is Adenylosuccinate synthetase.